A 188-amino-acid polypeptide reads, in one-letter code: Small ribosomal subunit protein uS7 (188 aa).

This sequence belongs to the universal ribosomal protein uS7 family. In terms of assembly, part of the 30S ribosomal subunit.

Functionally, one of the primary rRNA binding proteins, it binds directly to 16S rRNA where it nucleates assembly of the head domain of the 30S subunit. Is located at the subunit interface close to the decoding center. The protein is Small ribosomal subunit protein uS7 of Methanococcus maripaludis (strain DSM 14266 / JCM 13030 / NBRC 101832 / S2 / LL).